The chain runs to 199 residues: Glycerol-3-phosphate acyltransferase (199 aa).

The next 4 membrane-spanning stretches (helical) occupy residues Leu2–Val22, Pro77–Leu97, Ile113–Ala133, and Leu139–Leu159.

It belongs to the PlsY family. In terms of assembly, probably interacts with PlsX.

The protein localises to the cell membrane. It carries out the reaction an acyl phosphate + sn-glycerol 3-phosphate = a 1-acyl-sn-glycero-3-phosphate + phosphate. It participates in lipid metabolism; phospholipid metabolism. Its function is as follows. Catalyzes the transfer of an acyl group from acyl-phosphate (acyl-PO(4)) to glycerol-3-phosphate (G3P) to form lysophosphatidic acid (LPA). This enzyme utilizes acyl-phosphate as fatty acyl donor, but not acyl-CoA or acyl-ACP. This is Glycerol-3-phosphate acyltransferase from Rubrobacter xylanophilus (strain DSM 9941 / JCM 11954 / NBRC 16129 / PRD-1).